We begin with the raw amino-acid sequence, 919 residues long: TRPM8 channel-associated factor 2 (919 aa).

In terms of domain architecture, Peptidase M60 spans 542-841 (DCWVSTGLYL…TYLQLQEAFG (300 aa)).

This sequence belongs to the TCAF family. Isoform 2 interacts with TRPM8 (via N-terminus and C-terminus domains); the interaction inhibits TRPM8 channel activity. Interacts with TRPV6. In terms of tissue distribution, isoform 2 is expressed in the prostate and in cancerous prostate samples.

It localises to the cell membrane. Functionally, negatively regulates the plasma membrane cation channel TRPM8 activity. Involved in the recruitment of TRPM8 to the cell surface. Promotes prostate cancer cell migration stimulation in a TRPM8-dependent manner. In Homo sapiens (Human), this protein is TRPM8 channel-associated factor 2.